The primary structure comprises 497 residues: Glutamate--tRNA ligase (497 aa).

Positions 12-22 (PSPTGHLHIGN) match the 'HIGH' region motif. The 'KMSKS' region motif lies at 259 to 263 (KLSKR). K262 lines the ATP pocket.

The protein belongs to the class-I aminoacyl-tRNA synthetase family. Glutamate--tRNA ligase type 1 subfamily. Monomer.

The protein resides in the cytoplasm. The enzyme catalyses tRNA(Glu) + L-glutamate + ATP = L-glutamyl-tRNA(Glu) + AMP + diphosphate. Its function is as follows. Catalyzes the attachment of glutamate to tRNA(Glu) in a two-step reaction: glutamate is first activated by ATP to form Glu-AMP and then transferred to the acceptor end of tRNA(Glu). The polypeptide is Glutamate--tRNA ligase (Lacticaseibacillus casei (strain BL23) (Lactobacillus casei)).